Here is a 1754-residue protein sequence, read N- to C-terminus: Intraflagellar transport protein 172 homolog (1754 aa).

7 WD repeats span residues 14–53 (EQIQRIAGLAWSPNQQRLAIATADRHILLYDDAGERRDKF), 64–103 (KNSYVIRGLAFSPDSTKLAVGQSDSIVYVYKLGESWNDKK), 110–149 (PQASAVTALIWLTSGSIIAGLEDGKVRALHSKSNKSQSLY), 151–190 (GDSICISLAANTKGTGFLSGHNDGTIIRYFMTDEATEPLG), 194–232 (QHPVPPFALAWPQGGFCAGGCDQRIVFYDSMGRQLRTFD), 283–322 (ACLYTLSSLLWRRDGARLALGSVSGAVLLFESVLRRTVWQ), and 519–557 (TLLSNISFVQWVPQSDVVVAQSNSNLAIWYNIDLPEHVT). 11 TPR repeats span residues 623–656 (KAMWHNLALIALEDGNLRVAQRCYAALGNVSKAY), 690–723 (GSDLRTAERIYLEQGDIESALKMYQQLGMWDEAV), 748–781 (SEQQEKAGQVLEEQGDLQQAMSLYMKANKPARAA), 807–840 (SELYELAGDIAHRLSRPEAALALYRKGGAYARAL), 852–885 (TALEEEWGDWLVSRKQLDASINHYIEAGATQKAL), 1041–1074 (RGKLKNAEMHFVASGDWKSAVHMYCSSGRWEDGY), 1140–1166 (DEVHLKIAMSLEDEGKFEAAEAEFLKA), 1167–1199 (NKPREAILMYQHAGDWQAALNVAENHLPDAVGE), 1211–1250 (TSNYKDYEALLLRAHRPDLIIEHYKQESLYEDALRIAEEH), 1282–1315 (SRSYLQKAAEFAKKEQFRKAAECLMQIDSSNAED), and 1698–1733 (FPVRGRQPVTFQGSSNQVNRDVWSKFSVALKMSPGS).

Belongs to the IFT172 family.

It is found in the cell projection. Its subcellular location is the cilium. In terms of biological role, required for the maintenance and formation of cilia. The protein is Intraflagellar transport protein 172 homolog of Drosophila melanogaster (Fruit fly).